Consider the following 256-residue polypeptide: Floral homeotic protein APETALA 1 (256 aa).

Residues 1-61 form the MADS-box domain; that stretch reads MGRGRVQLKR…GKLFEYSTDS (61 aa). The 91-residue stretch at 88–178 folds into the K-box domain; sequence NTNWSMEYNR…SKQIKEREKI (91 aa). Positions 88–185 form a coiled coil; it reads NTNWSMEYNR…EKILRAQQEQ (98 aa).

As to quaternary structure, homodimer capable of binding to CArG-box sequences. Heterodimer with SEP3, AP1 and SVP. Binds AP3/PI to form a ternary complex. Interacts with the SEU-LUG corepressor complex when complexed to AGL24 or SVP. Interacts with AGL15 and AGL16. Interacts with TT16/AGL32. In terms of tissue distribution, expressed in young flower primordia, later becomes localized to sepals and petals.

It is found in the nucleus. Functionally, transcription factor that promotes early floral meristem identity in synergy with LEAFY. Is required subsequently for the transition of an inflorescence meristem into a floral meristem. Is indispensable for normal development of sepals and petals in flowers. Positively regulates the B class homeotic proteins APETALA3 and PISTILLATA with the cooperation of LEAFY and UFO. Interacts with SEPALLATA3 or AP3/PI heterodimer to form complexes that could be involved in genes regulation during floral meristem development. Positively regulates AGAMOUS in cooperation with LEAFY. Displays a redundant function with CAULIFLOWER in the up-regulation of LEAFY. Together with AGL24 and SVP, controls the identity of the floral meristem and regulates expression of class B, C and E genes. Represses flowering time genes AGL24, SVP and SOC1 in emerging floral meristems. The chain is Floral homeotic protein APETALA 1 (AP1) from Arabidopsis thaliana (Mouse-ear cress).